A 385-amino-acid polypeptide reads, in one-letter code: Putative non-inhibitory serpin-Z11 (385 aa).

Residues 324 to 348 (GTTAVEAMYSPSSPGYSPGYQPPRP) form an RCL region.

Belongs to the serpin family.

This Oryza sativa subsp. japonica (Rice) protein is Putative non-inhibitory serpin-Z11.